The sequence spans 172 residues: R-phycocyanin-2 beta chain (172 aa).

The residue at position 72 (asparagine 72) is an N4-methylasparagine. Residue cysteine 82 participates in (2R,3E)-phycocyanobilin binding. Cysteine 153 lines the (2R,3E)-phycoerythrobilin pocket.

The protein belongs to the phycobiliprotein family. As to quaternary structure, heterodimer of an alpha and a beta chain. In terms of processing, contains two covalently linked bilin chromophores.

It localises to the cellular thylakoid membrane. Light-harvesting photosynthetic bile pigment-protein from the phycobiliprotein complex. The sequence is that of R-phycocyanin-2 beta chain (rpcB) from Synechococcus sp. (strain WH8103).